Reading from the N-terminus, the 339-residue chain is Holliday junction branch migration complex subunit RuvB (339 aa).

The tract at residues 1 to 22 is disordered; that stretch reads MIDADPTLRPEPLPEDNDRALR. Residues 1 to 182 form a large ATPase domain (RuvB-L) region; that stretch reads MIDADPTLRP…FGIPTRLQFY (182 aa). ATP is bound by residues Leu-21, Arg-22, Gly-63, Lys-66, Thr-67, Thr-68, 129–131, Arg-172, Tyr-182, and Arg-219; that span reads EDF. A Mg(2+)-binding site is contributed by Thr-67. The segment at 183 to 253 is small ATPAse domain (RuvB-S); it reads TIDELFEIVS…LADGALTRLG (71 aa). A head domain (RuvB-H) region spans residues 256-339; that stretch reads QLGLDGADRR…PPKSQSDLFG (84 aa). The DNA site is built by Arg-292, Arg-311, and Arg-316.

It belongs to the RuvB family. In terms of assembly, homohexamer. Forms an RuvA(8)-RuvB(12)-Holliday junction (HJ) complex. HJ DNA is sandwiched between 2 RuvA tetramers; dsDNA enters through RuvA and exits via RuvB. An RuvB hexamer assembles on each DNA strand where it exits the tetramer. Each RuvB hexamer is contacted by two RuvA subunits (via domain III) on 2 adjacent RuvB subunits; this complex drives branch migration. In the full resolvosome a probable DNA-RuvA(4)-RuvB(12)-RuvC(2) complex forms which resolves the HJ.

The protein localises to the cytoplasm. It catalyses the reaction ATP + H2O = ADP + phosphate + H(+). Functionally, the RuvA-RuvB-RuvC complex processes Holliday junction (HJ) DNA during genetic recombination and DNA repair, while the RuvA-RuvB complex plays an important role in the rescue of blocked DNA replication forks via replication fork reversal (RFR). RuvA specifically binds to HJ cruciform DNA, conferring on it an open structure. The RuvB hexamer acts as an ATP-dependent pump, pulling dsDNA into and through the RuvAB complex. RuvB forms 2 homohexamers on either side of HJ DNA bound by 1 or 2 RuvA tetramers; 4 subunits per hexamer contact DNA at a time. Coordinated motions by a converter formed by DNA-disengaged RuvB subunits stimulates ATP hydrolysis and nucleotide exchange. Immobilization of the converter enables RuvB to convert the ATP-contained energy into a lever motion, pulling 2 nucleotides of DNA out of the RuvA tetramer per ATP hydrolyzed, thus driving DNA branch migration. The RuvB motors rotate together with the DNA substrate, which together with the progressing nucleotide cycle form the mechanistic basis for DNA recombination by continuous HJ branch migration. Branch migration allows RuvC to scan DNA until it finds its consensus sequence, where it cleaves and resolves cruciform DNA. In Ruegeria sp. (strain TM1040) (Silicibacter sp.), this protein is Holliday junction branch migration complex subunit RuvB.